The primary structure comprises 858 residues: Leucine--tRNA ligase (858 aa).

A 'HIGH' region motif is present at residues 42–52 (PYPSGRLHMGH). Residues 618-622 (KMSKS) carry the 'KMSKS' region motif. K621 is an ATP binding site.

Belongs to the class-I aminoacyl-tRNA synthetase family.

The protein localises to the cytoplasm. The enzyme catalyses tRNA(Leu) + L-leucine + ATP = L-leucyl-tRNA(Leu) + AMP + diphosphate. This chain is Leucine--tRNA ligase, found in Vibrio atlanticus (strain LGP32) (Vibrio splendidus (strain Mel32)).